A 794-amino-acid chain; its full sequence is Protein IQ-DOMAIN 32 (794 aa).

The segment at 15 to 101 (CSGGDDTSAD…QSFSVDEKKS (87 aa)) is disordered. Polar residues-rich tracts occupy residues 23 to 33 (ADPNSTALENK) and 56 to 65 (SVVSETTPAS). A phosphoserine mark is found at Ser78, Ser80, Ser142, Ser193, and Ser195. Residues 80–95 (SPDNNNVSEKQQQSFS) are compositionally biased toward polar residues. 2 IQ domains span residues 214 to 242 (DESVIVVIQAAVRGFLARRELLRSKKVIK) and 243 to 265 (LQAAVRGHLVRSQAMGSLRCVQA). Residues 230 to 241 (ARRELLRSKKVI) form a calmodulin-binding region. A disordered region spans residues 277–296 (HSTKDGSRVSATSDKSEPNA). A Phosphoserine modification is found at Ser369. The disordered stretch occupies residues 375–417 (VNSDSTVENKTETDMPSYEASKVEGQNVELSETEKMSQYDSPE). The residue at position 459 (Ser459) is a Phosphoserine. 2 disordered regions span residues 472–555 (ELTS…RVEA) and 578–794 (ATSM…KWQR). A compositionally biased stretch (polar residues) spans 473–486 (LTSSTGSNKAMTLS). The segment covering 487–500 (SKDDVLGEEGKTDI) has biased composition (basic and acidic residues). Ser502 and Ser544 each carry phosphoserine. 2 stretches are compositionally biased toward basic and acidic residues: residues 539–555 (TLEKKSDAEGAEPRVEA) and 585–607 (EDPKEKVENAKDEVEISATHHEP). The span at 643 to 654 (SQATPASQASSS) shows a compositional bias: low complexity. The Nuclear localization signal motif lies at 657 to 664 (ARKGKSEK). Polar residues predominate over residues 768–786 (NGKQVSPRIQRSASQAQQG).

It belongs to the IQD family. As to quaternary structure, binds to multiple calmodulin (CaM) in the presence of Ca(2+) and CaM-like proteins.

The protein resides in the nucleus. It is found in the cytoplasm. Its subcellular location is the cytoskeleton. May be involved in cooperative interactions with calmodulins or calmodulin-like proteins. Recruits calmodulin proteins to microtubules, thus being a potential scaffold in cellular signaling and trafficking. May associate with nucleic acids and regulate gene expression at the transcriptional or post-transcriptional level. The polypeptide is Protein IQ-DOMAIN 32 (Arabidopsis thaliana (Mouse-ear cress)).